The following is a 117-amino-acid chain: Small ribosomal subunit protein uS13 (117 aa).

Positions 94-117 are disordered; the sequence is SLPLRGQRTKTNARTRKGPRRLIK.

The protein belongs to the universal ribosomal protein uS13 family. As to quaternary structure, part of the 30S ribosomal subunit. Forms a loose heterodimer with protein S19. Forms two bridges to the 50S subunit in the 70S ribosome.

In terms of biological role, located at the top of the head of the 30S subunit, it contacts several helices of the 16S rRNA. In the 70S ribosome it contacts the 23S rRNA (bridge B1a) and protein L5 of the 50S subunit (bridge B1b), connecting the 2 subunits; these bridges are implicated in subunit movement. Contacts the tRNAs in the A and P-sites. In Vesicomyosocius okutanii subsp. Calyptogena okutanii (strain HA), this protein is Small ribosomal subunit protein uS13.